The primary structure comprises 198 residues: Peptidyl-tRNA hydrolase (198 aa).

Tyrosine 14 contacts tRNA. Catalysis depends on histidine 19, which acts as the Proton acceptor. The tRNA site is built by tyrosine 64, asparagine 66, and asparagine 112.

Belongs to the PTH family. As to quaternary structure, monomer.

The protein resides in the cytoplasm. The enzyme catalyses an N-acyl-L-alpha-aminoacyl-tRNA + H2O = an N-acyl-L-amino acid + a tRNA + H(+). Hydrolyzes ribosome-free peptidyl-tRNAs (with 1 or more amino acids incorporated), which drop off the ribosome during protein synthesis, or as a result of ribosome stalling. In terms of biological role, catalyzes the release of premature peptidyl moieties from peptidyl-tRNA molecules trapped in stalled 50S ribosomal subunits, and thus maintains levels of free tRNAs and 50S ribosomes. The polypeptide is Peptidyl-tRNA hydrolase (Beijerinckia indica subsp. indica (strain ATCC 9039 / DSM 1715 / NCIMB 8712)).